A 112-amino-acid chain; its full sequence is Pediocin PA-1 immunity protein (112 aa).

Imparts immunity to pediocin PA-1/ACH to naturally sensitive host strains. The polypeptide is Pediocin PA-1 immunity protein (pedB) (Pediococcus acidilactici).